The primary structure comprises 123 residues: Small ribosomal subunit protein uS12cz/uS12cy (123 aa).

The protein belongs to the universal ribosomal protein uS12 family. As to quaternary structure, part of the 30S ribosomal subunit.

It is found in the plastid. It localises to the chloroplast. In terms of biological role, with S4 and S5 plays an important role in translational accuracy. Located at the interface of the 30S and 50S subunits. The chain is Small ribosomal subunit protein uS12cz/uS12cy (rps12-A) from Arabis hirsuta (Hairy rock-cress).